A 581-amino-acid chain; its full sequence is Proline--tRNA ligase (581 aa).

The protein belongs to the class-II aminoacyl-tRNA synthetase family. ProS type 1 subfamily. Homodimer.

The protein localises to the cytoplasm. It carries out the reaction tRNA(Pro) + L-proline + ATP = L-prolyl-tRNA(Pro) + AMP + diphosphate. Catalyzes the attachment of proline to tRNA(Pro) in a two-step reaction: proline is first activated by ATP to form Pro-AMP and then transferred to the acceptor end of tRNA(Pro). As ProRS can inadvertently accommodate and process non-cognate amino acids such as alanine and cysteine, to avoid such errors it has two additional distinct editing activities against alanine. One activity is designated as 'pretransfer' editing and involves the tRNA(Pro)-independent hydrolysis of activated Ala-AMP. The other activity is designated 'posttransfer' editing and involves deacylation of mischarged Ala-tRNA(Pro). The misacylated Cys-tRNA(Pro) is not edited by ProRS. The sequence is that of Proline--tRNA ligase from Variovorax paradoxus (strain S110).